The sequence spans 190 residues: Adenylate kinase (190 aa).

ATP is bound at residue 11 to 16 (GAGKGT). The interval 31-60 (STGDIFRFNIKNETELGKLAKTFMDKGDLV) is NMP. AMP-binding positions include threonine 32, arginine 37, 58–60 (DLV), 86–89 (GFPR), and glutamine 93. The segment at 127–137 (ERGKTSGRVDD) is LID. Residue arginine 128 coordinates ATP. AMP is bound by residues arginine 134 and arginine 146. Glycine 174 contributes to the ATP binding site.

It belongs to the adenylate kinase family. As to quaternary structure, monomer.

It localises to the cytoplasm. It catalyses the reaction AMP + ATP = 2 ADP. It participates in purine metabolism; AMP biosynthesis via salvage pathway; AMP from ADP: step 1/1. Functionally, catalyzes the reversible transfer of the terminal phosphate group between ATP and AMP. Plays an important role in cellular energy homeostasis and in adenine nucleotide metabolism. The protein is Adenylate kinase of Flavobacterium psychrophilum (strain ATCC 49511 / DSM 21280 / CIP 103535 / JIP02/86).